The chain runs to 276 residues: Putative metal-binding protein TC_0696 (276 aa).

The signal sequence occupies residues 1 to 18 (MRLLILLLFSFGIIYSHG). A divalent metal cation is bound by residues His59, His121, His185, and Asp256.

It belongs to the bacterial solute-binding protein 9 family.

Its subcellular location is the periplasm. Part of an ATP-binding cassette (ABC) transport system involved in metal import. Binds a metal with high affinity and specificity and delivers it to the membrane permease for translocation into the cytoplasm. In Chlamydia muridarum (strain MoPn / Nigg), this protein is Putative metal-binding protein TC_0696.